The primary structure comprises 198 residues: Adenylyl-sulfate kinase (198 aa).

31–38 (GLSGAGKS) lines the ATP pocket. Residue Ser-105 is the Phosphoserine intermediate of the active site.

This sequence belongs to the APS kinase family.

It catalyses the reaction adenosine 5'-phosphosulfate + ATP = 3'-phosphoadenylyl sulfate + ADP + H(+). It functions in the pathway sulfur metabolism; hydrogen sulfide biosynthesis; sulfite from sulfate: step 2/3. Catalyzes the synthesis of activated sulfate. This is Adenylyl-sulfate kinase from Shewanella amazonensis (strain ATCC BAA-1098 / SB2B).